A 175-amino-acid chain; its full sequence is MGSEPTKVMVAVNASTIKDYPNPSISCKRAFEWTLEKIVRSNTSDFKILLLHVQVVDEDGFDDVDSIYASPEDFRDMRQSNKAKGLHLLEFFVNKCHEIGVGCEAWIKTGDPKDVICQEVKRVRPDFLVVGSRGLGRFQKVFVGTVSAFCVKHAECPVMTIKRNADETPSDPADD.

Residues Ala-11, Val-12, Asn-13, Ser-26, Cys-27, Val-53, Gly-131, Arg-133, Thr-145, Val-146, and Ser-147 each coordinate AMP.

Belongs to the universal stress protein A family. Homohexamer.

This is Universal stress protein A-like protein from Arabidopsis thaliana (Mouse-ear cress).